The primary structure comprises 63 residues: Large ribosomal subunit protein uL29 (63 aa).

It belongs to the universal ribosomal protein uL29 family.

The chain is Large ribosomal subunit protein uL29 from Neisseria meningitidis serogroup C (strain 053442).